We begin with the raw amino-acid sequence, 340 residues long: Glycerol-3-phosphate dehydrogenase [NAD(P)+] (340 aa).

NADPH-binding residues include Trp11, Arg33, and Lys110. Sn-glycerol 3-phosphate contacts are provided by Lys110, Gly144, and Ser146. Residue Ala148 participates in NADPH binding. Sn-glycerol 3-phosphate is bound by residues Lys199, Asp252, Ser262, Arg263, and Asn264. The active-site Proton acceptor is Lys199. Arg263 serves as a coordination point for NADPH. Val287 and Glu289 together coordinate NADPH.

Belongs to the NAD-dependent glycerol-3-phosphate dehydrogenase family.

The protein localises to the cytoplasm. The enzyme catalyses sn-glycerol 3-phosphate + NAD(+) = dihydroxyacetone phosphate + NADH + H(+). The catalysed reaction is sn-glycerol 3-phosphate + NADP(+) = dihydroxyacetone phosphate + NADPH + H(+). The protein operates within membrane lipid metabolism; glycerophospholipid metabolism. Its function is as follows. Catalyzes the reduction of the glycolytic intermediate dihydroxyacetone phosphate (DHAP) to sn-glycerol 3-phosphate (G3P), the key precursor for phospholipid synthesis. The polypeptide is Glycerol-3-phosphate dehydrogenase [NAD(P)+] (Polynucleobacter asymbioticus (strain DSM 18221 / CIP 109841 / QLW-P1DMWA-1) (Polynucleobacter necessarius subsp. asymbioticus)).